A 130-amino-acid polypeptide reads, in one-letter code: TPVGFIGLGNMGNPMAKADRIITMLPSSMNSIEVYSGANGILKEVEKMGAVFMDAPVSGGVGAARICNNMLLAISMIGTAEAMNLGIRDLGLAQDSATSTKTPILLGSVAHQIYRDFSSVFQYLREEETF.

NAD(+) is bound by residues 1-17, 25-26, and Asn-30; these read TPVGFIGLGNMGNPMAK and LP. At Lys-43 the chain carries N6-acetyllysine. At Lys-47 the chain carries N6-acetyllysine; alternate. N6-succinyllysine; alternate is present on Lys-47. Lys-101 is modified (N6-succinyllysine).

Belongs to the HIBADH-related family. 3-hydroxyisobutyrate dehydrogenase subfamily. As to quaternary structure, homodimer.

Its subcellular location is the mitochondrion. The catalysed reaction is 3-hydroxy-2-methylpropanoate + NAD(+) = 2-methyl-3-oxopropanoate + NADH + H(+). The protein operates within amino-acid degradation; L-valine degradation. The protein is 3-hydroxyisobutyrate dehydrogenase, mitochondrial of Mesocricetus auratus (Golden hamster).